Reading from the N-terminus, the 626-residue chain is Phosphomethylpyrimidine synthase (626 aa).

Residues asparagine 237, methionine 266, tyrosine 295, histidine 331, 351-353 (SRG), 392-395 (DGLR), and glutamate 431 contribute to the substrate site. Histidine 435 is a Zn(2+) binding site. Residue tyrosine 458 participates in substrate binding. Histidine 499 is a binding site for Zn(2+). Positions 579, 582, and 587 each coordinate [4Fe-4S] cluster.

Belongs to the ThiC family. In terms of assembly, homodimer. The cofactor is [4Fe-4S] cluster.

The enzyme catalyses 5-amino-1-(5-phospho-beta-D-ribosyl)imidazole + S-adenosyl-L-methionine = 4-amino-2-methyl-5-(phosphooxymethyl)pyrimidine + CO + 5'-deoxyadenosine + formate + L-methionine + 3 H(+). It functions in the pathway cofactor biosynthesis; thiamine diphosphate biosynthesis. Its function is as follows. Catalyzes the synthesis of the hydroxymethylpyrimidine phosphate (HMP-P) moiety of thiamine from aminoimidazole ribotide (AIR) in a radical S-adenosyl-L-methionine (SAM)-dependent reaction. The polypeptide is Phosphomethylpyrimidine synthase (Cupriavidus pinatubonensis (strain JMP 134 / LMG 1197) (Cupriavidus necator (strain JMP 134))).